A 325-amino-acid chain; its full sequence is All-trans-nonaprenyl-diphosphate synthase (geranyl-diphosphate specific) (325 aa).

Residues lysine 48, arginine 51, and histidine 81 each contribute to the isopentenyl diphosphate site. Mg(2+) contacts are provided by aspartate 88 and aspartate 92. Arginine 97 is an an all-trans-polyprenyl diphosphate binding site. An isopentenyl diphosphate-binding site is contributed by arginine 98. Positions 174, 175, 211, and 228 each coordinate an all-trans-polyprenyl diphosphate.

It belongs to the FPP/GGPP synthase family. As to quaternary structure, homodimer. Mg(2+) is required as a cofactor.

It carries out the reaction 7 isopentenyl diphosphate + (2E)-geranyl diphosphate = all-trans-nonaprenyl diphosphate + 7 diphosphate. In terms of biological role, catalyzes the sequential condensation of isopentenyl diphosphate (IPP) with the allylic substrate to give solanesyl diphosphate. Could be important to determine the side chain length of ubiquinone. This Rhodobacter capsulatus (Rhodopseudomonas capsulata) protein is All-trans-nonaprenyl-diphosphate synthase (geranyl-diphosphate specific) (sdsA).